The chain runs to 847 residues: Matrin-3 (847 aa).

At Ser2 the chain carries N-acetylserine. Lys3 is subject to N6-acetyllysine; alternate. Residue Lys3 forms a Glycyl lysine isopeptide (Lys-Gly) (interchain with G-Cter in SUMO2); alternate linkage. Ser4, Ser9, Ser11, Ser14, Ser22, Ser41, Ser118, and Ser126 each carry phosphoserine. Residues Lys132 and Lys146 each participate in a glycyl lysine isopeptide (Lys-Gly) (interchain with G-Cter in SUMO2) cross-link. Disordered regions lie at residues 146 to 174 (KRRR…YRVP) and 187 to 214 (DSFD…SGYY). A Phosphothreonine modification is found at Thr150. The residue at position 157 (Ser157) is a Phosphoserine. Position 158 is a phosphotyrosine (Tyr158). Over residues 160–174 (RDGRSATREPPYRVP) the composition is skewed to basic and acidic residues. Phosphoserine is present on residues Ser164, Ser188, and Ser195. Residues 201-214 (DYDHGSRSQESGYY) are compositionally biased toward basic and acidic residues. At Tyr202 the chain carries Phosphotyrosine. Residues Ser206, Ser208, and Ser211 each carry the phosphoserine modification. Position 219 is a phosphotyrosine (Tyr219). Ser234 is modified (phosphoserine). Residue Lys245 forms a Glycyl lysine isopeptide (Lys-Gly) (interchain with G-Cter in SUMO2) linkage. Ser264 is subject to Phosphoserine. A Glycyl lysine isopeptide (Lys-Gly) (interchain with G-Cter in SUMO2) cross-link involves residue Lys269. Ser275 bears the Phosphoserine mark. A disordered region spans residues 342-394 (PFMLQQSTNPAPGILGPPPPSFHLGGPAVGPRGNLGAGNGNLQGPRHMQKGRV). The RRM 1 domain maps to 398-473 (RVVHIMDFQR…KPVRVHLSQK (76 aa)). Residues Lys478, Lys487, and Lys491 each participate in a glycyl lysine isopeptide (Lys-Gly) (interchain with G-Cter in SUMO2) cross-link. An RRM 2 domain is found at 496-571 (RVIHLSNLPH…RCVKVDLSEK (76 aa)). Phosphoserine is present on residues Ser509 and Ser511. Lys515 is covalently cross-linked (Glycyl lysine isopeptide (Lys-Gly) (interchain with G-Cter in SUMO2)). Lys522 bears the N6-acetyllysine; alternate mark. A Glycyl lysine isopeptide (Lys-Gly) (interchain with G-Cter in SUMO2); alternate cross-link involves residue Lys522. Ser533 bears the Phosphoserine mark. Residues Lys554 and Lys555 each participate in a glycyl lysine isopeptide (Lys-Gly) (interchain with G-Cter in SUMO2) cross-link. The residue at position 571 (Lys571) is an N6-acetyllysine. Residues 588 to 786 (KKDKSRKRSY…DEYRIGPYQP (199 aa)) form a disordered region. Residues Ser596, Ser598, Ser604, and Ser606 each carry the phosphoserine modification. A compositionally biased stretch (basic and acidic residues) spans 600 to 643 (DGKESPSDKKSKTDGSQKTESSTEGKEQEEKSGEDGEKDTKDDQ). Glycyl lysine isopeptide (Lys-Gly) (interchain with G-Cter in SUMO2) cross-links involve residues Lys617 and Lys630. Residues 653–665 (ESEDELLVDEEEA) are compositionally biased toward acidic residues. Residues Ser654, Ser671, Ser673, and Ser674 each carry the phosphoserine modification. Over residues 666 to 676 (AALLESGSSVG) the composition is skewed to low complexity. Thr679 bears the Phosphothreonine mark. A Phosphoserine modification is found at Ser689. The span at 689-704 (SDGKKEPSDKAVKKDG) shows a compositional bias: basic and acidic residues. The short motif at 710–718 (AKKKLKKVD) is the Nuclear localization signal element. Glycyl lysine isopeptide (Lys-Gly) (interchain with G-Cter in SUMO2) cross-links involve residues Lys719 and Lys736. At Thr741 the chain carries Phosphothreonine. Ser747, Ser759, and Ser766 each carry phosphoserine. The span at 767–780 (DENKDDYTIPDEYR) shows a compositional bias: basic and acidic residues. Residue Lys770 forms a Glycyl lysine isopeptide (Lys-Gly) (interchain with G-Cter in SUMO2) linkage. The segment at 801-832 (FYCKLCSLFYTNEEVAKNTHCSSLPHYQKLKK) adopts a Matrin-type zinc-finger fold. Lys836 carries the N6-acetyllysine; alternate modification. A Glycyl lysine isopeptide (Lys-Gly) (interchain with G-Cter in SUMO2); alternate cross-link involves residue Lys836.

As to quaternary structure, part of a complex consisting of SFPQ, NONO and MATR3. Interacts with AGO1 and AGO2. Part of a complex composed at least of ASH2L, EMSY, HCFC1, HSPA8, CCAR2, MATR3, MKI67, RBBP5, TUBB2A, WDR5 and ZNF335; this complex may have a histone H3-specific methyltransferase activity. Interacts with TARDBP. Part of the HDP-RNP complex composed of at least HEXIM1, PRKDC, XRCC5, XRCC6, paraspeckle proteins (SFPQ, NONO, PSPC1, RBM14, and MATR3) and NEAT1 RNA. Interacts with FUS. Interacts with IGF2BP1; the interaction is enhanced by SEPIN14P20 peptide RBPR. Interacts with IGF2BP2 and IGF2BP3. Interacts with RBPMS.

The protein localises to the nucleus matrix. In terms of biological role, may play a role in transcription or may interact with other nuclear matrix proteins to form the internal fibrogranular network. In association with the SFPQ-NONO heteromer may play a role in nuclear retention of defective RNAs. Plays a role in the regulation of DNA virus-mediated innate immune response by assembling into the HDP-RNP complex, a complex that serves as a platform for IRF3 phosphorylation and subsequent innate immune response activation through the cGAS-STING pathway. Binds to N6-methyladenosine (m6A)-containing mRNAs and contributes to MYC stability by binding to m6A-containing MYC mRNAs. May bind to specific miRNA hairpins. The protein is Matrin-3 (MATR3) of Homo sapiens (Human).